Reading from the N-terminus, the 365-residue chain is Forkhead box protein E4 (365 aa).

Basic and acidic residues predominate over residues 1–13; it reads MDSPDSVRVKCES. A disordered region spans residues 1–46; the sequence is MDSPDSVRVKCESKGSCSPEEGLNNGLPEEHNQASGGRRRKRPVQR. Positions 48 to 142 form a DNA-binding region, fork-head; it reads KPPYSYIALI…DNGSFLRRRK (95 aa).

As to expression, first expressed at the end of gastrulation (stage 13) in the anterior ectodermal placode. During intermediate neural plate stages (stages 14-16), expression expands to the presumptive nasal ectoderm (PNE) and the presumptive lens ectoderm (PLE). By stages 18-21, expression begins to deplete in the PNE, while intensifying in the PLE so that by late neural stages (stages 22), expression is restricted to the PLE. Throughout tailbud stages (stage 23-31), expression is maintained in the lens placode and lens vesicle. In the maturing lens (stage 32-onwards), expression is restricted to the anterior lens epithelium, where it remains during the tadpole stage. In tadpoles there is additional expression in the ventral midline of the pharynx. Expression continues in the adult eye.

Its subcellular location is the nucleus. Probable transcription factor. Mediates lens formation in the embryo by promoting the proliferation of the specified lens ectoderm and suppressing its terminal differentiation. The sequence is that of Forkhead box protein E4 from Xenopus laevis (African clawed frog).